We begin with the raw amino-acid sequence, 594 residues long: Putative diflavin flavoprotein A 4 (594 aa).

The interval 57–250 (RRGTTSNSYL…LTLKMIAPGH (194 aa)) is zinc metallo-hydrolase. Residues 279–417 (VALIYASAYG…VCTTSGANFA (139 aa)) form the Flavodoxin-like domain. Residues 445 to 594 (VGRIIGSIGV…IRHRKSGGQY (150 aa)) form a flavodoxin-reductase-like region.

This sequence in the N-terminal section; belongs to the zinc metallo-hydrolase group 3 family. It in the C-terminal section; belongs to the flavodoxin reductase family. The cofactor is Fe cation.

Functionally, mediates electron transfer from NADH to oxygen, reducing it to water. This modular protein has 3 redox cofactors, in other organisms the same activity requires 2 or 3 proteins. This Synechocystis sp. (strain ATCC 27184 / PCC 6803 / Kazusa) protein is Putative diflavin flavoprotein A 4 (dfa4).